The sequence spans 149 residues: Deoxyuridine 5'-triphosphate nucleotidohydrolase (149 aa).

Residues 68–70, N81, 85–87, and M95 each bind substrate; these read RSG and LID.

This sequence belongs to the dUTPase family. Mg(2+) is required as a cofactor.

It catalyses the reaction dUTP + H2O = dUMP + diphosphate + H(+). It functions in the pathway pyrimidine metabolism; dUMP biosynthesis; dUMP from dCTP (dUTP route): step 2/2. Functionally, this enzyme is involved in nucleotide metabolism: it produces dUMP, the immediate precursor of thymidine nucleotides and it decreases the intracellular concentration of dUTP so that uracil cannot be incorporated into DNA. This is Deoxyuridine 5'-triphosphate nucleotidohydrolase from Polynucleobacter necessarius subsp. necessarius (strain STIR1).